The primary structure comprises 267 residues: uncharacterized protein (267 aa).

It belongs to the lin-8 family.

This is an uncharacterized protein from Caenorhabditis elegans.